A 147-amino-acid chain; its full sequence is uncharacterized protein (147 aa).

The HTH asnC-type domain maps to 2–63 (LDELDKKIIG…KLNYENIGYD (62 aa)). Positions 21-40 (YREIAKELNVAVGTIYNRIK) form a DNA-binding region, H-T-H motif.

This is an uncharacterized protein from Pyrococcus abyssi (strain GE5 / Orsay).